A 946-amino-acid polypeptide reads, in one-letter code: C-1-tetrahydrofolate synthase, cytoplasmic (946 aa).

Residues 2-319 (AGQVLDGKAC…PPLPLKLLTP (318 aa)) are methylenetetrahydrofolate dehydrogenase and cyclohydrolase. Substrate-binding positions include 51–55 (YVRMK) and 98–100 (VQL). 169–171 (GRS) contributes to the NADP(+) binding site. At Ser176 the chain carries Phosphoserine. Ser194 provides a ligand contact to NADP(+). 277 to 281 (PGGVG) lines the substrate pocket. Thr318 carries the phosphothreonine modification. Positions 320-946 (VPSDIDISRA…DDDGEIDGLF (627 aa)) are formyltetrahydrofolate synthetase. Phosphoserine is present on Ser322. Residue 384–391 (TPLGEGKS) coordinates ATP.

The protein in the N-terminal section; belongs to the tetrahydrofolate dehydrogenase/cyclohydrolase family. It in the C-terminal section; belongs to the formate--tetrahydrofolate ligase family. Homodimer.

It is found in the cytoplasm. The protein localises to the nucleus. It carries out the reaction (6R)-5,10-methylene-5,6,7,8-tetrahydrofolate + NADP(+) = (6R)-5,10-methenyltetrahydrofolate + NADPH. The enzyme catalyses (6R)-5,10-methenyltetrahydrofolate + H2O = (6R)-10-formyltetrahydrofolate + H(+). It catalyses the reaction (6S)-5,6,7,8-tetrahydrofolate + formate + ATP = (6R)-10-formyltetrahydrofolate + ADP + phosphate. It functions in the pathway one-carbon metabolism; tetrahydrofolate interconversion. Its function is as follows. Cytoplasmic isozyme of C-1-tetrahydrofolate synthase. The trifunctional enzyme catalyzes the interconversion of the one-carbon derivatives of tetrahydrofolate (THF) between different oxidation states by the enzymatic activities 10-formyltetrahydrofolate synthetase, 5,lO-methenyltetrahydrofolate cyclohydrolase, and 5,lO-methylenetetrahydrofolate dehydrogenase. Involved in the generation of one-carbon intermediates in the biosynthesis of the purine bases. The sequence is that of C-1-tetrahydrofolate synthase, cytoplasmic (ADE3) from Saccharomyces cerevisiae (strain ATCC 204508 / S288c) (Baker's yeast).